Consider the following 89-residue polypeptide: Large ribosomal subunit protein bL27 (89 aa).

The tract at residues 1-21 (MAHKKSGGSSRNGRDSNPKYL) is disordered.

Belongs to the bacterial ribosomal protein bL27 family.

The sequence is that of Large ribosomal subunit protein bL27 from Hyphomonas neptunium (strain ATCC 15444).